The chain runs to 56 residues: Large ribosomal subunit protein bL32 (56 aa).

The tract at residues 1 to 56 is disordered; sequence MAVPARRTSKAKKNKRRTHKGLTTPGLSRDSETGEYRMSHRISPDGTYKGRTIIEK. Over residues 7–20 the composition is skewed to basic residues; the sequence is RTSKAKKNKRRTHK. The segment covering 29-38 has biased composition (basic and acidic residues); sequence RDSETGEYRM.

This sequence belongs to the bacterial ribosomal protein bL32 family.

The polypeptide is Large ribosomal subunit protein bL32 (Listeria monocytogenes serotype 4a (strain HCC23)).